We begin with the raw amino-acid sequence, 72 residues long: NAD(P)H-quinone oxidoreductase subunit O (72 aa).

This sequence belongs to the complex I NdhO subunit family. NDH-1 can be composed of about 15 different subunits; different subcomplexes with different compositions have been identified which probably have different functions.

It localises to the cellular thylakoid membrane. The catalysed reaction is a plastoquinone + NADH + (n+1) H(+)(in) = a plastoquinol + NAD(+) + n H(+)(out). It carries out the reaction a plastoquinone + NADPH + (n+1) H(+)(in) = a plastoquinol + NADP(+) + n H(+)(out). Its function is as follows. NDH-1 shuttles electrons from an unknown electron donor, via FMN and iron-sulfur (Fe-S) centers, to quinones in the respiratory and/or the photosynthetic chain. The immediate electron acceptor for the enzyme in this species is believed to be plastoquinone. Couples the redox reaction to proton translocation, and thus conserves the redox energy in a proton gradient. Cyanobacterial NDH-1 also plays a role in inorganic carbon-concentration. This is NAD(P)H-quinone oxidoreductase subunit O from Crocosphaera subtropica (strain ATCC 51142 / BH68) (Cyanothece sp. (strain ATCC 51142)).